Here is a 37-residue protein sequence, read N- to C-terminus: Large ribosomal subunit protein bL36 (37 aa).

The protein belongs to the bacterial ribosomal protein bL36 family.

This Prochlorococcus marinus (strain MIT 9303) protein is Large ribosomal subunit protein bL36.